Consider the following 156-residue polypeptide: Deoxyuridine 5'-triphosphate nucleotidohydrolase (156 aa).

Substrate contacts are provided by residues 76 to 78 (RSG), asparagine 89, 93 to 95 (TVD), and lysine 103.

This sequence belongs to the dUTPase family. The cofactor is Mg(2+).

The enzyme catalyses dUTP + H2O = dUMP + diphosphate + H(+). It functions in the pathway pyrimidine metabolism; dUMP biosynthesis; dUMP from dCTP (dUTP route): step 2/2. Its function is as follows. This enzyme is involved in nucleotide metabolism: it produces dUMP, the immediate precursor of thymidine nucleotides and it decreases the intracellular concentration of dUTP so that uracil cannot be incorporated into DNA. This is Deoxyuridine 5'-triphosphate nucleotidohydrolase from Rhizobium etli (strain ATCC 51251 / DSM 11541 / JCM 21823 / NBRC 15573 / CFN 42).